The chain runs to 61 residues: Metallothionein-1A (61 aa).

Methionine 1 bears the N-acetylmethionine mark. The tract at residues 1–29 is beta; that stretch reads MDPNCSCPTGGSCSCAGSCTCKACRCTSC. A divalent metal cation contacts are provided by cysteine 5, cysteine 7, cysteine 13, cysteine 15, cysteine 19, cysteine 21, cysteine 24, cysteine 26, cysteine 29, cysteine 33, cysteine 34, cysteine 36, cysteine 37, cysteine 41, cysteine 44, cysteine 48, cysteine 50, and cysteine 57. The interval 30-61 is alpha; that stretch reads KKSCCSCCPAGCARCAQGCICKGASDKCSCCA. The residue at position 58 (serine 58) is a Phosphoserine. A divalent metal cation is bound by residues cysteine 59 and cysteine 60.

Belongs to the metallothionein superfamily. Type 1 family. In terms of assembly, monomer.

Functionally, metallothioneins have a high content of cysteine residues that bind various heavy metals; these proteins are transcriptionally regulated by both heavy metals and glucocorticoids. This is Metallothionein-1A (MT1A) from Sus scrofa (Pig).